We begin with the raw amino-acid sequence, 219 residues long: Deoxyribose-phosphate aldolase (219 aa).

Asp92 (proton donor/acceptor) is an active-site residue. Residue Lys154 is the Schiff-base intermediate with acetaldehyde of the active site. The active-site Proton donor/acceptor is the Lys183.

The protein belongs to the DeoC/FbaB aldolase family. DeoC type 1 subfamily.

Its subcellular location is the cytoplasm. It catalyses the reaction 2-deoxy-D-ribose 5-phosphate = D-glyceraldehyde 3-phosphate + acetaldehyde. It participates in carbohydrate degradation; 2-deoxy-D-ribose 1-phosphate degradation; D-glyceraldehyde 3-phosphate and acetaldehyde from 2-deoxy-alpha-D-ribose 1-phosphate: step 2/2. Catalyzes a reversible aldol reaction between acetaldehyde and D-glyceraldehyde 3-phosphate to generate 2-deoxy-D-ribose 5-phosphate. This is Deoxyribose-phosphate aldolase from Dictyoglomus turgidum (strain DSM 6724 / Z-1310).